The chain runs to 181 residues: Oligoribonuclease (181 aa).

Positions 8 to 171 constitute an Exonuclease domain; the sequence is LIWIDLEMTG…DDIRESVAEL (164 aa). Tyr129 is an active-site residue.

It belongs to the oligoribonuclease family.

Its subcellular location is the cytoplasm. 3'-to-5' exoribonuclease specific for small oligoribonucleotides. The chain is Oligoribonuclease from Salmonella choleraesuis (strain SC-B67).